The primary structure comprises 469 residues: Aspartyl/glutamyl-tRNA(Asn/Gln) amidotransferase subunit B (469 aa).

Belongs to the GatB/GatE family. GatB subfamily. Heterotrimer of A, B and C subunits.

It carries out the reaction L-glutamyl-tRNA(Gln) + L-glutamine + ATP + H2O = L-glutaminyl-tRNA(Gln) + L-glutamate + ADP + phosphate + H(+). It catalyses the reaction L-aspartyl-tRNA(Asn) + L-glutamine + ATP + H2O = L-asparaginyl-tRNA(Asn) + L-glutamate + ADP + phosphate + 2 H(+). Functionally, allows the formation of correctly charged Asn-tRNA(Asn) or Gln-tRNA(Gln) through the transamidation of misacylated Asp-tRNA(Asn) or Glu-tRNA(Gln) in organisms which lack either or both of asparaginyl-tRNA or glutaminyl-tRNA synthetases. The reaction takes place in the presence of glutamine and ATP through an activated phospho-Asp-tRNA(Asn) or phospho-Glu-tRNA(Gln). The chain is Aspartyl/glutamyl-tRNA(Asn/Gln) amidotransferase subunit B from Methanococcus maripaludis (strain DSM 14266 / JCM 13030 / NBRC 101832 / S2 / LL).